Here is a 334-residue protein sequence, read N- to C-terminus: Uracil-DNA glycosylase (334 aa).

Basic residues predominate over residues 1–17; that stretch reads MKRACSRSPSPRRRPSS. Disordered regions lie at residues 1-63 and 79-104; these read MKRA…CRSS and VTFS…AATS. The segment covering 40–50 has biased composition (polar residues); that stretch reads GASNDASTETR. Asp-178 (proton acceptor) is an active-site residue.

The protein belongs to the uracil-DNA glycosylase (UDG) superfamily. UNG family.

The protein localises to the host nucleus. The catalysed reaction is Hydrolyzes single-stranded DNA or mismatched double-stranded DNA and polynucleotides, releasing free uracil.. Its function is as follows. Excises uracil residues from the DNA which can arise as a result of misincorporation of dUMP residues by DNA polymerase or deamination of cytosines. Therefore may reduce deleterious uracil incorporation into the viral genome, particularly in terminally differentiated cells which lack DNA repair enzymes. The chain is Uracil-DNA glycosylase from Human herpesvirus 1 (strain 17) (HHV-1).